A 245-amino-acid chain; its full sequence is 14-3-3 protein theta (245 aa).

It belongs to the 14-3-3 family. Homodimer, and heterodimer with other family members.

It is found in the cytoplasm. Its function is as follows. Adapter protein implicated in the regulation of a large spectrum of both general and specialized signaling pathways. Binds to a large number of partners, usually by recognition of a phosphoserine or phosphothreonine motif. Binding generally results in the modulation of the activity of the binding partner. This chain is 14-3-3 protein theta (YWHAQ), found in Gallus gallus (Chicken).